The chain runs to 495 residues: Protein YhjJ (495 aa).

The N-terminal stretch at 1 to 24 is a signal peptide; that stretch reads MQGTKIRLLAGSLLMLASAGYVQA.

It belongs to the peptidase M16 family.

The protein resides in the periplasm. This is Protein YhjJ (yhjJ) from Salmonella typhimurium (strain LT2 / SGSC1412 / ATCC 700720).